A 462-amino-acid chain; its full sequence is ESX-1 secretion system protein EccE1 (462 aa).

Transmembrane regions (helical) follow at residues 9-29 (FSTG…IAFL) and 34-54 (WWAG…TFYG).

It belongs to the EccE family. As to quaternary structure, part of the ESX-1 / type VII secretion system (T7SS), which is composed of cytosolic and membrane components. The ESX-1 membrane complex is composed of EccB1, EccCa1, EccCb1, EccD1 and EccE1.

Its subcellular location is the cell inner membrane. In terms of biological role, part of the ESX-1 specialized secretion system, which delivers several virulence factors to host cells during infection, including the key virulence factors EsxA (ESAT-6) and EsxB (CFP-10). This is ESX-1 secretion system protein EccE1 from Mycobacterium tuberculosis (strain CDC 1551 / Oshkosh).